A 338-amino-acid chain; its full sequence is UbiA prenyltransferase domain-containing protein 1 (338 aa).

Residue alanine 2 is modified to N-acetylalanine. The next 8 membrane-spanning stretches (helical) occupy residues leucine 83–threonine 103, phenylalanine 134–proline 154, leucine 160–phenylalanine 180, leucine 188–glycine 208, serine 209–leucine 229, isoleucine 245–leucine 267, threonine 277–glutamate 297, and leucine 315–leucine 335.

Belongs to the UbiA prenyltransferase family. In terms of assembly, interacts with HMGCR and SOAT1. Ubiquitously expressed.

The protein localises to the endoplasmic reticulum membrane. It localises to the golgi apparatus membrane. Its subcellular location is the mitochondrion membrane. It is found in the cytoplasm. The protein resides in the nucleus. It catalyses the reaction menadiol + (2E,6E,10E)-geranylgeranyl diphosphate = menaquinol-4 + diphosphate. The catalysed reaction is all-trans-decaprenyl diphosphate + 4-hydroxybenzoate = 4-hydroxy-3-(all-trans-decaprenyl)benzoate + diphosphate. It participates in quinol/quinone metabolism; menaquinone biosynthesis. It functions in the pathway cofactor biosynthesis; ubiquinone biosynthesis. In terms of biological role, prenyltransferase that mediates the formation of menaquinone-4 (MK-4) and coenzyme Q10. MK-4 is a vitamin K2 isoform present at high concentrations in the brain, kidney and pancreas, and is required for endothelial cell development. Mediates the conversion of phylloquinone (PK) into MK-4, probably by cleaving the side chain of phylloquinone (PK) to release 2-methyl-1,4-naphthoquinone (menadione; K3) and then prenylating it with geranylgeranyl pyrophosphate (GGPP) to form MK-4. Also plays a role in cardiovascular development independently of MK-4 biosynthesis, by acting as a coenzyme Q10 biosynthetic enzyme: coenzyme Q10, also named ubiquinone, plays an important antioxidant role in the cardiovascular system. Mediates biosynthesis of coenzyme Q10 in the Golgi membrane, leading to protect cardiovascular tissues from NOS3/eNOS-dependent oxidative stress. The sequence is that of UbiA prenyltransferase domain-containing protein 1 from Homo sapiens (Human).